Here is a 135-residue protein sequence, read N- to C-terminus: MKVVGNYRVNTANSSTDTSGEHLTCLRSQLFVAYRNGRVDEAVSLGFLDCWIGGDLTNFKGCYLTNQLPIQIFTAIFDMNTDVIILSQFMYYRLKNQKKKMIFQPQLFKDSITREKVRLSLWGVLCPVYIPYSFR.

This is an uncharacterized protein from Homo sapiens (Human).